The sequence spans 367 residues: Protein P39 (367 aa).

Coiled coils occupy residues 165-202 and 235-308; these read REGEEINILRKEALELQKQVTEQKAVVAELRLQISKQQ and EMIE…SDRL.

Functionally, might be involved in virion assembly and vector-mediated transmission of the virus. The chain is Protein P39 from Peanut clump virus (isolate 87/TGTA2) (PCV).